We begin with the raw amino-acid sequence, 188 residues long: Adrenodoxin, mitochondrial (188 aa).

The transit peptide at 1–64 directs the protein to the mitochondrion; that stretch reads MAAAPGARLL…RPLSVSARAR (64 aa). The residue at position 67 (serine 67) is a Phosphoserine. The region spanning 69 to 175 is the 2Fe-2S ferredoxin-type domain; that stretch reads DKVTVHFKNR…NMTVRVPEAV (107 aa). Lysine 70 is modified (N6-acetyllysine; alternate). At lysine 70 the chain carries N6-succinyllysine; alternate. 4 residues coordinate [2Fe-2S] cluster: cysteine 110, cysteine 116, cysteine 119, and cysteine 156. Residue lysine 162 is modified to N6-succinyllysine. Serine 181 carries the post-translational modification Phosphoserine.

This sequence belongs to the adrenodoxin/putidaredoxin family. Interacts with CYP11A1. It depends on [2Fe-2S] cluster as a cofactor. In terms of tissue distribution, found in all tissues, most abundant in adrenals, ovaries and testes.

The protein resides in the mitochondrion matrix. In terms of biological role, essential for the synthesis of various steroid hormones. Participates in the reduction of mitochondrial cytochrome P450 for steroidogenesis. Transfers electrons from adrenodoxin reductase to CYP11A1, a cytochrome P450 that catalyzes cholesterol side-chain cleavage. Does not form a ternary complex with adrenodoxin reductase and CYP11A1 but shuttles between the two enzymes to transfer electrons. The chain is Adrenodoxin, mitochondrial (Fdx1) from Rattus norvegicus (Rat).